A 732-amino-acid chain; its full sequence is Glycine--tRNA ligase (732 aa).

The transit peptide at 1-27 (MRHVLSLVYKCSVFSKQVTVFSNHLRL) directs the protein to the mitochondrion. One can recognise a WHEP-TRS domain in the interval 61-117 (ILAPLRANVKEQGDLVRKLKEEKAPEIDIKKAVAELKTRKKILEDKELSLAPAEDLF). E297 contacts glycine. Residues 329–331 (RNE) and 340–341 (RV) each bind ATP. E348 contacts glycine. ATP is bound at residue 453–454 (EC). 572-574 (EPS) lines the glycine pocket. Residue R579 participates in ATP binding.

The protein belongs to the class-II aminoacyl-tRNA synthetase family. Homodimer.

It is found in the mitochondrion. Its subcellular location is the cytoplasm. The protein localises to the cell projection. It localises to the axon. It carries out the reaction tRNA(Gly) + glycine + ATP = glycyl-tRNA(Gly) + AMP + diphosphate. The catalysed reaction is 2 ATP + H(+) = P(1),P(4)-bis(5'-adenosyl) tetraphosphate + diphosphate. Catalyzes the ATP-dependent ligation of glycine to the 3'-end of its cognate tRNA, via the formation of an aminoacyl-adenylate intermediate (Gly-AMP). Also produces diadenosine tetraphosphate (Ap4A), a universal pleiotropic signaling molecule needed for cell regulation pathways, by direct condensation of 2 ATPs. Thereby, may play a special role in Ap4A homeostasis. Required for terminal arborization of both dendrites and axons during development. The sequence is that of Glycine--tRNA ligase from Bombyx mori (Silk moth).